Reading from the N-terminus, the 206-residue chain is MTINKEGLRVDACSGDPMSIFGLWYEEVLRVKSVREPSAMVLATCDSENRPSARVVLLKRYSDAGFEFYTNLESRKAREIALNPCVSLVFDWRPIYKQVRVEGIAEFMDASESDAYFASRSRESQIGAWCSRQSMILEDRDVLLSKIELMEREYEGREIPRPKFWGGIRVVPNVIEFWMDGKHRLHDRRQYSKNIDGTWTSVYLYP.

FMN contacts are provided by residues Arg-54–Lys-59, Tyr-69–Thr-70, Arg-75, Lys-76, and Gln-98. Lys-59 contributes to the substrate binding site. 3 residues coordinate substrate: Tyr-116, Arg-120, and Ser-124. FMN contacts are provided by residues Gln-133–Ser-134 and Trp-178. Substrate is bound at residue Arg-184 to His-186. Arg-188 is an FMN binding site.

Belongs to the pyridoxamine 5'-phosphate oxidase family. Homodimer. FMN is required as a cofactor.

The enzyme catalyses pyridoxamine 5'-phosphate + O2 + H2O = pyridoxal 5'-phosphate + H2O2 + NH4(+). It catalyses the reaction pyridoxine 5'-phosphate + O2 = pyridoxal 5'-phosphate + H2O2. The protein operates within cofactor metabolism; pyridoxal 5'-phosphate salvage; pyridoxal 5'-phosphate from pyridoxamine 5'-phosphate: step 1/1. It functions in the pathway cofactor metabolism; pyridoxal 5'-phosphate salvage; pyridoxal 5'-phosphate from pyridoxine 5'-phosphate: step 1/1. In terms of biological role, catalyzes the oxidation of either pyridoxine 5'-phosphate (PNP) or pyridoxamine 5'-phosphate (PMP) into pyridoxal 5'-phosphate (PLP). The chain is Pyridoxine/pyridoxamine 5'-phosphate oxidase from Anaplasma phagocytophilum (strain HZ).